We begin with the raw amino-acid sequence, 148 residues long: Large ribosomal subunit protein bL9 (148 aa).

This sequence belongs to the bacterial ribosomal protein bL9 family.

Its function is as follows. Binds to the 23S rRNA. The chain is Large ribosomal subunit protein bL9 from Marinobacter nauticus (strain ATCC 700491 / DSM 11845 / VT8) (Marinobacter aquaeolei).